Reading from the N-terminus, the 64-residue chain is H/ACA ribonucleoprotein complex subunit 3 (64 aa).

Belongs to the NOP10 family. In terms of assembly, component of the box H/ACA small nucleolar ribonucleoprotein (H/ACA snoRNP) complex consisting of Nop60B, Gar1, NPH2 and Nop10, and associated with H/ACA-type snoRNAs.

It localises to the nucleus. The protein resides in the nucleolus. Its function is as follows. Component of the box H/ACA small nucleolar ribonucleoprotein (H/ACA snoRNP) complex, which catalyzes pseudouridylation of rRNA. This involves the isomerization of uridine such that the ribose is subsequently attached to C5, instead of the normal N1. Pseudouridine ('psi') residues may serve to stabilize the conformation of rRNAs. Required for ribosome biogenesis. H/ACA snoRNP complex-dependent ribosome biogenesis is important in female germline cell differentiation during oogenesis. The polypeptide is H/ACA ribonucleoprotein complex subunit 3 (Drosophila melanogaster (Fruit fly)).